We begin with the raw amino-acid sequence, 618 residues long: Serine--tRNA ligase, cytoplasmic (618 aa).

Residue 417–419 coordinates L-serine; the sequence is TSE. 448 to 450 is an ATP binding site; the sequence is RTE. An L-serine-binding site is contributed by glutamate 472. Position 536 to 539 (536 to 539) interacts with ATP; the sequence is EVSS. Residue serine 570 participates in L-serine binding.

It belongs to the class-II aminoacyl-tRNA synthetase family. Type-1 seryl-tRNA synthetase subfamily. Homodimer. The tRNA molecule binds across the dimer.

The protein localises to the cytoplasm. The enzyme catalyses tRNA(Ser) + L-serine + ATP = L-seryl-tRNA(Ser) + AMP + diphosphate + H(+). The catalysed reaction is tRNA(Sec) + L-serine + ATP = L-seryl-tRNA(Sec) + AMP + diphosphate + H(+). The protein operates within aminoacyl-tRNA biosynthesis; selenocysteinyl-tRNA(Sec) biosynthesis; L-seryl-tRNA(Sec) from L-serine and tRNA(Sec): step 1/1. In terms of biological role, catalyzes the attachment of serine to tRNA(Ser). Is also able to aminoacylate tRNA(Sec) with serine, to form the misacylated tRNA L-seryl-tRNA(Sec), which will be further converted into selenocysteinyl-tRNA(Sec). This Plasmodium falciparum (isolate 3D7) protein is Serine--tRNA ligase, cytoplasmic.